Reading from the N-terminus, the 337-residue chain is ATP-dependent 6-phosphofructokinase (337 aa).

An ATP-binding site is contributed by Gly-11. An ADP-binding site is contributed by 21–25 (RAVVR). Residues 72–73 (RY) and 102–105 (GDGS) contribute to the ATP site. Asp-103 is a Mg(2+) binding site. Residue 125 to 127 (TID) participates in substrate binding. Residue Asp-127 is the Proton acceptor of the active site. Arg-154 serves as a coordination point for ADP. Residues Arg-162 and 169 to 171 (MGR) each bind substrate. ADP is bound by residues 185–187 (GAD) and 214–216 (KNH). Substrate is bound by residues Glu-223, Arg-245, and 251–254 (HILR).

This sequence belongs to the phosphofructokinase type A (PFKA) family. ATP-dependent PFK group I subfamily. Prokaryotic clade 'B1' sub-subfamily. Homotetramer. Mg(2+) serves as cofactor.

Its subcellular location is the cytoplasm. It catalyses the reaction beta-D-fructose 6-phosphate + ATP = beta-D-fructose 1,6-bisphosphate + ADP + H(+). Its pathway is carbohydrate degradation; glycolysis; D-glyceraldehyde 3-phosphate and glycerone phosphate from D-glucose: step 3/4. Its activity is regulated as follows. Allosterically activated by ADP and other diphosphonucleosides, and allosterically inhibited by phosphoenolpyruvate. Functionally, catalyzes the phosphorylation of D-fructose 6-phosphate to fructose 1,6-bisphosphate by ATP, the first committing step of glycolysis. This Streptococcus uberis (strain ATCC BAA-854 / 0140J) protein is ATP-dependent 6-phosphofructokinase.